The primary structure comprises 304 residues: RNA polymerase II holoenzyme cyclin-like subunit (304 aa).

The region spanning 43–174 (TIHDSKANKQ…LIEELQSYLI (132 aa)) is the Cyclin N-terminal domain.

Belongs to the cyclin family. Cyclin C subfamily. In terms of assembly, component of the SRB8-11 complex, a regulatory module of the Mediator complex.

It localises to the nucleus. Functionally, component of the SRB8-11 complex. The SRB8-11 complex is a regulatory module of the Mediator complex which is itself involved in regulation of basal and activated RNA polymerase II-dependent transcription. The SRB8-11 complex may be involved in the transcriptional repression of a subset of genes regulated by Mediator. It may inhibit the association of the Mediator complex with RNA polymerase II to form the holoenzyme complex. The SRB8-11 complex phosphorylates the C-terminal domain (CTD) of the largest subunit of RNA polymerase II. The sequence is that of RNA polymerase II holoenzyme cyclin-like subunit (SSN8) from Kluyveromyces lactis (strain ATCC 8585 / CBS 2359 / DSM 70799 / NBRC 1267 / NRRL Y-1140 / WM37) (Yeast).